A 255-amino-acid polypeptide reads, in one-letter code: 4-diphosphocytidyl-2-C-methyl-D-erythritol kinase (255 aa).

Lysine 6 is an active-site residue. 95 to 105 (PVCAGLGGGSS) is a binding site for ATP. Residue aspartate 137 is part of the active site.

The protein belongs to the GHMP kinase family. IspE subfamily.

It catalyses the reaction 4-CDP-2-C-methyl-D-erythritol + ATP = 4-CDP-2-C-methyl-D-erythritol 2-phosphate + ADP + H(+). The protein operates within isoprenoid biosynthesis; isopentenyl diphosphate biosynthesis via DXP pathway; isopentenyl diphosphate from 1-deoxy-D-xylulose 5-phosphate: step 3/6. Catalyzes the phosphorylation of the position 2 hydroxy group of 4-diphosphocytidyl-2C-methyl-D-erythritol. In Campylobacter jejuni subsp. jejuni serotype O:6 (strain 81116 / NCTC 11828), this protein is 4-diphosphocytidyl-2-C-methyl-D-erythritol kinase.